A 925-amino-acid chain; its full sequence is Translation initiation factor IF-2 (925 aa).

2 disordered regions span residues 52 to 84 (GGGK…VKAP) and 98 to 326 (AGGN…GVRL). The span at 57–68 (AEGAAKAPAKAA) shows a compositional bias: low complexity. A compositionally biased stretch (basic and acidic residues) spans 69-84 (AKGDAKTAAKGDVKAP). The segment covering 98 to 138 (AGGNGEAAAPPAQPGGTATTPAAQATPEAPARPGPAAARPS) has biased composition (low complexity). Pro residues-rich tracts occupy residues 139–169 (APAP…PAPK) and 193–207 (PRPV…PGAP). Gly residues predominate over residues 236–296 (RPGGGRPGGP…GAAGAFGRPG (61 aa)). Basic residues predominate over residues 300-309 (RRGRKSKRQK). In terms of domain architecture, tr-type G spans 421–592 (TRPPVVTVMG…AVLLTADAAL (172 aa)). A G1 region spans residues 430-437 (GHVDHGKT). 430–437 (GHVDHGKT) lines the GTP pocket. The tract at residues 455–459 (GITQH) is G2. The interval 480–483 (DTPG) is G3. GTP contacts are provided by residues 480 to 484 (DTPGH) and 534 to 537 (NKID). Residues 534 to 537 (NKID) are G4. The G5 stretch occupies residues 570-572 (SAK).

It belongs to the TRAFAC class translation factor GTPase superfamily. Classic translation factor GTPase family. IF-2 subfamily.

It localises to the cytoplasm. One of the essential components for the initiation of protein synthesis. Protects formylmethionyl-tRNA from spontaneous hydrolysis and promotes its binding to the 30S ribosomal subunits. Also involved in the hydrolysis of GTP during the formation of the 70S ribosomal complex. In Mycolicibacterium paratuberculosis (strain ATCC BAA-968 / K-10) (Mycobacterium paratuberculosis), this protein is Translation initiation factor IF-2.